We begin with the raw amino-acid sequence, 444 residues long: C4-dicarboxylate transport protein (444 aa).

9 consecutive transmembrane segments (helical) span residues 21–41 (HLYV…HFYP), 57–77 (LVKM…IAGM), 92–112 (IYFL…ANVV), 161–181 (GDIL…ALVG), 201–221 (LVSI…AFTI), 234–254 (LLIG…LGAV), 320–340 (IYMT…LSLS), 345–365 (LLLV…AGFI), and 368–388 (AATL…ILGI).

This sequence belongs to the dicarboxylate/amino acid:cation symporter (DAACS) (TC 2.A.23) family.

It is found in the cell inner membrane. Its function is as follows. Responsible for the transport of dicarboxylates such as succinate, fumarate, and malate from the periplasm across the membrane. This is C4-dicarboxylate transport protein from Brucella anthropi (strain ATCC 49188 / DSM 6882 / CCUG 24695 / JCM 21032 / LMG 3331 / NBRC 15819 / NCTC 12168 / Alc 37) (Ochrobactrum anthropi).